Reading from the N-terminus, the 311-residue chain is RNA polymerase sigma factor SigA4 (311 aa).

A sigma-70 factor domain-2 region spans residues 78 to 148 (MLKANLRLVV…TRAIDNHART (71 aa)). The Interaction with polymerase core subunit RpoC signature appears at 102–105 (DLIQ). Residues 157-234 (EKISRIKKMT…DPKSLEPMDA (78 aa)) form a sigma-70 factor domain-3 region. The interval 247 to 304 (WLAHLTEREQQVLQLRFGLHDGEQHTLAEIGRRLNVSRERIRQVEARALQKLRVLSQQ) is sigma-70 factor domain-4. The segment at residues 273 to 292 (LAEIGRRLNVSRERIRQVEA) is a DNA-binding region (H-T-H motif).

Belongs to the sigma-70 factor family.

Its subcellular location is the cytoplasm. Its function is as follows. Sigma factors are initiation factors that promote the attachment of RNA polymerase to specific initiation sites and are then released. The protein is RNA polymerase sigma factor SigA4 (sigA4) of Synechococcus elongatus (strain ATCC 33912 / PCC 7942 / FACHB-805) (Anacystis nidulans R2).